The primary structure comprises 522 residues: F-box-like/WD repeat-containing protein TBL1XR1-B (522 aa).

Residues S4–Q36 enclose the LisH domain. The 46-residue stretch at G41–A86 folds into the F-box-like domain. The segment at A122–A150 is disordered. Residues T123–G141 are compositionally biased toward polar residues. WD repeat units follow at residues G175–S214, P231–L270, Q272–Q311, F314–T352, G355–D394, A397–T445, K448–S487, and R489–K522.

Belongs to the WD repeat EBI family. In terms of assembly, interacts with heterodimers of rxra and thrb, and this interaction is abrogated by thyroid hormone binding to thrb. Interacts with ncor1.

The protein resides in the nucleus. F-box-like protein which acts as an integral component of the N-CoR transcriptional corepressor complex. Probably regulates transcription activation mediated by nuclear receptors. May mediate the recruitment of the 19S proteasome complex, leading to the subsequent proteasomal degradation of the N-CoR complex, thereby allowing cofactor exchange and transcription activation. The polypeptide is F-box-like/WD repeat-containing protein TBL1XR1-B (tbl1xr1-b) (Xenopus laevis (African clawed frog)).